The following is a 201-amino-acid chain: Reticulon-like protein B10 (201 aa).

One can recognise a Reticulon domain in the interval 14–201; sequence VADLIMWKNR…KPTNKIKKMQ (188 aa). 3 helical membrane-spanning segments follow: residues 25–45, 46–66, and 135–155; these read GGFL…KCGY, SFFP…FLWA, and FLNF…IPFL.

Its subcellular location is the endoplasmic reticulum membrane. This Arabidopsis thaliana (Mouse-ear cress) protein is Reticulon-like protein B10 (RTNLB10).